Reading from the N-terminus, the 1218-residue chain is MADKLYQIKLDIKKGKNIVGSDGSVCSPYLRVTWGGKKQQKTKVITKSAEPEWNFSCLLEIKKEKNPQKPGLEFELIEHKQFSEKEISSTTYQLPESLILGEACNYSVPMSIATSKGDQKCEILIAITAINFGKDKQDEEKKRHDEIQKKFAQLVEQLATDSKAREGMMKLPYEARAQLVEQHRDKLANEKHPDEYVVLLIKEITRKNIQLAGGLQKSHSASNASLGSLSPVTPRVDDGLSVAELKNISVALRSRGLDWIHQFHKLGATTRLVELLSLYVNKKSHTEESLQKQLECLNCIKNLMNNNVGIGYIFGIKDSFKTIVLCLGSEYEKVNELAIGLLNTICFLPKINGHKLLIELLNYFKEEKKESRRFISIVKSLKSKAGVIETKETLKTKSIYLSFINIIVNTPAEIDLRLALRQEFYWLGIKEILVKLSNYTYDESPELDTQITVFEEEESKDNKEMSERFQEFKGLNLDNVDDVLKTLMDRIRPKGLVDCMREISKDLLLLPIDDDVGIRNWVLASRIIKQISLRDKNIGIDEDILPLENLLLMCEQEAKEVPLKSQIESLKKDAQDLAKKITTQDIELKEKVEIIKKNEELTTKQLEEQINIAKKKDEEINQLKALVEQLKLTQGTAKPDSAAASTSVAPPPPPPPMTGGGAPPPPPPPPPMTGGGGPPPPPPPPPMTGGGPPPPPPPPPMTGGGPPPPPPPPGGGPPPPPPPPGAKAGGPPPPPPPFGKGPPPPPGGFGMKKAAAPPRKEVPVPALKMKGLQWVSLNDKKIQGTIFSKFNLDTSKDINLDYKDIEGVFAAKVIEKKESTAPKKTGPVSIIDPKTSQNLSIFLSQFKGKSYDDICGAISKGDETVFQPNHIDALIGFLPSEDDINNINEFLREEKDITKLGPPEQFSMKIHSVPQVKARLQAMKFKYAYESKKSDLKVDIDNFKQGTQEIKGSEKIPKLLEVILILGNFINGGTARGNAYGFKLNTITKLADTKSTDNKLSLVNYLTRVVIKDFPHLNSFAQDLGHVEAAGRVSLSQVQAEVATLRKEFVQVQKSIETLNSGTGEEAVDPFKVKYEEFCTQTAEDIDLITSSSQQIETDYKDLLAMFGEDSKSEPSEFFGMFTKFMDQYDKATKENEQLSIQAEKIAKREAAKKLKEEEDAKKKQLAEERKQKGETVEVKESVVDDLLDTIASGDAFKNRRRRARKTDQDSTIEPIDL.

The C2 domain occupies 1–108 (MADKLYQIKL…ILGEACNYSV (108 aa)). Residues 139–539 (EEKKRHDEIQ…QISLRDKNIG (401 aa)) enclose the GBD/FH3 domain. Positions 563–638 (LKSQIESLKK…QLKLTQGTAK (76 aa)) form a coiled coil. The tract at residues 634-762 (QGTAKPDSAA…KAAAPPRKEV (129 aa)) is disordered. The segment covering 649–747 (APPPPPPPMT…FGKGPPPPPG (99 aa)) has biased composition (pro residues). The region spanning 652–737 (PPPPPMTGGG…AGGPPPPPPP (86 aa)) is the FH1 domain. The region spanning 759-1155 (RKEVPVPALK…IAKREAAKKL (397 aa)) is the FH2 domain. Positions 1034 to 1061 (SLSQVQAEVATLRKEFVQVQKSIETLNS) form a coiled coil. Disordered regions lie at residues 1153-1179 (KKLKEEEDAKKKQLAEERKQKGETVEV) and 1198-1218 (KNRRRRARKTDQDSTIEPIDL). The DAD domain maps to 1174–1209 (GETVEVKESVVDDLLDTIASGDAFKNRRRRARKTDQ).

Belongs to the formin homology family. Diaphanous subfamily. As to quaternary structure, interacts (via GBD/FH3 domain) with activated Rho-GTPases.

In terms of biological role, formins play an important role in the nucleation of actin and the formation of linear actin filaments. This chain is Formin-A (forA), found in Dictyostelium discoideum (Social amoeba).